A 561-amino-acid chain; its full sequence is Dihydroxy-acid dehydratase (561 aa).

Cysteine 50 is a [2Fe-2S] cluster binding site. A Mg(2+)-binding site is contributed by aspartate 82. Cysteine 123 serves as a coordination point for [2Fe-2S] cluster. Mg(2+) is bound by residues aspartate 124 and lysine 125. Lysine 125 is modified (N6-carboxylysine). Cysteine 195 is a [2Fe-2S] cluster binding site. Glutamate 447 contributes to the Mg(2+) binding site. Serine 473 (proton acceptor) is an active-site residue.

The protein belongs to the IlvD/Edd family. In terms of assembly, homodimer. [2Fe-2S] cluster serves as cofactor. The cofactor is Mg(2+).

The enzyme catalyses (2R)-2,3-dihydroxy-3-methylbutanoate = 3-methyl-2-oxobutanoate + H2O. It catalyses the reaction (2R,3R)-2,3-dihydroxy-3-methylpentanoate = (S)-3-methyl-2-oxopentanoate + H2O. The protein operates within amino-acid biosynthesis; L-isoleucine biosynthesis; L-isoleucine from 2-oxobutanoate: step 3/4. Its pathway is amino-acid biosynthesis; L-valine biosynthesis; L-valine from pyruvate: step 3/4. In terms of biological role, functions in the biosynthesis of branched-chain amino acids. Catalyzes the dehydration of (2R,3R)-2,3-dihydroxy-3-methylpentanoate (2,3-dihydroxy-3-methylvalerate) into 2-oxo-3-methylpentanoate (2-oxo-3-methylvalerate) and of (2R)-2,3-dihydroxy-3-methylbutanoate (2,3-dihydroxyisovalerate) into 2-oxo-3-methylbutanoate (2-oxoisovalerate), the penultimate precursor to L-isoleucine and L-valine, respectively. The sequence is that of Dihydroxy-acid dehydratase from Trichodesmium erythraeum (strain IMS101).